Consider the following 234-residue polypeptide: Large ribosomal subunit protein uL1 (234 aa).

This sequence belongs to the universal ribosomal protein uL1 family. In terms of assembly, part of the 50S ribosomal subunit.

In terms of biological role, binds directly to 23S rRNA. The L1 stalk is quite mobile in the ribosome, and is involved in E site tRNA release. Its function is as follows. Protein L1 is also a translational repressor protein, it controls the translation of the L11 operon by binding to its mRNA. The protein is Large ribosomal subunit protein uL1 of Tolumonas auensis (strain DSM 9187 / NBRC 110442 / TA 4).